A 421-amino-acid chain; its full sequence is GTPase Obg (421 aa).

The region spanning 4–161 (LHFIDEAFNE…FKIKIQLKVL (158 aa)) is the Obg domain. Residues 162–327 (ADVGLLGFPS…LKYAIKNLLQ (166 aa)) enclose the OBG-type G domain. GTP contacts are provided by residues 168–175 (GFPSVGKS), 193–197 (FTTLF), 214–217 (DLPG), 281–284 (NKMD), and 308–310 (SLI). Residues serine 175 and threonine 195 each coordinate Mg(2+). The region spanning 343–421 (DLNSETQTFT…ICNYLFDFVI (79 aa)) is the OCT domain.

This sequence belongs to the TRAFAC class OBG-HflX-like GTPase superfamily. OBG GTPase family. As to quaternary structure, monomer. Mg(2+) is required as a cofactor.

It is found in the cytoplasm. An essential GTPase which binds GTP, GDP and possibly (p)ppGpp with moderate affinity, with high nucleotide exchange rates and a fairly low GTP hydrolysis rate. Plays a role in control of the cell cycle, stress response, ribosome biogenesis and in those bacteria that undergo differentiation, in morphogenesis control. This chain is GTPase Obg, found in Phytoplasma australiense.